Consider the following 89-residue polypeptide: Small ribosomal subunit protein uS17 (89 aa).

This sequence belongs to the universal ribosomal protein uS17 family. As to quaternary structure, part of the 30S ribosomal subunit.

In terms of biological role, one of the primary rRNA binding proteins, it binds specifically to the 5'-end of 16S ribosomal RNA. In Ralstonia pickettii (strain 12J), this protein is Small ribosomal subunit protein uS17.